A 342-amino-acid chain; its full sequence is Peroxisomal membrane protein import receptor PEX19 (342 aa).

Over residues 1 to 18 (MNENEYDNFDDLDDLLDE) the composition is skewed to acidic residues. Disordered regions lie at residues 1–68 (MNEN…DPEL) and 119–141 (CSSLKSNSTDKGTVNGSNPGFKN). A compositionally biased stretch (basic and acidic residues) spans 41–54 (SENKEKNAESKDSD). Residue S62 is modified to Phosphoserine. S304 carries the phosphoserine modification. Residues 321–342 (IDGNDPNLGNLDKELTDGCKQQ) are disordered. Basic and acidic residues predominate over residues 331–342 (LDKELTDGCKQQ). Residue C339 is modified to Cysteine methyl ester. C339 carries S-farnesyl cysteine lipidation. Residues 340-342 (KQQ) constitute a propeptide, removed in mature form.

The protein belongs to the peroxin-19 family. As to quaternary structure, interacts (farnesylated) with PEX3; farnesylation is required for this interaction. Interacts with PEX2, PEX5, PEX10, PEX11, PEX12, PEX13, PEX14, PEX17, PEX22, PEX25, PEX30 and PEX32; the interaction requires well-defined PEX19-binding sites within the peroxisomal membrane protein targeting signal (mPTS) of the PMPs and is independent on the presence of PEX3. Interacts with VPS1.

The protein resides in the cytoplasm. Its subcellular location is the peroxisome membrane. It localises to the endoplasmic reticulum membrane. Functionally, required for proper post-translational import and stabilization of peroxisomal membrane proteins (PMPs). Acts as a cytosolic import receptor for PMPs and delivers them to the docking factor PEX3 at the peroxisomal membrane for subsequent insertion into the membrane. Acts as a chaperone in stabilizing or maintaining PMPs in the lipid bilayer. Directs PEX17, a peripheral component of the peroxisomal matrix protein translocation machinery, to peroxisomes. Stabilizes VPS1, a protein required for peroxisomal fission, at the peroxisomal membrane. Also acts in conjunction with PEX3 in the formation of peroxisomes from preperoxisomal compartments at the endoplasmic reticulum during de novo peroxisome synthesis, probably via the import of additional PMPs. The polypeptide is Peroxisomal membrane protein import receptor PEX19 (PEX19) (Saccharomyces cerevisiae (strain ATCC 204508 / S288c) (Baker's yeast)).